A 261-amino-acid polypeptide reads, in one-letter code: tRNA pseudouridine synthase A (261 aa).

The active-site Nucleophile is D51. Y109 serves as a coordination point for substrate.

It belongs to the tRNA pseudouridine synthase TruA family. In terms of assembly, homodimer.

The enzyme catalyses uridine(38/39/40) in tRNA = pseudouridine(38/39/40) in tRNA. Functionally, formation of pseudouridine at positions 38, 39 and 40 in the anticodon stem and loop of transfer RNAs. The polypeptide is tRNA pseudouridine synthase A (Shewanella sp. (strain MR-7)).